The chain runs to 322 residues: (12E)-labda-8(17),12,14-triene synthase (322 aa).

Over residues Met-1–Pro-11 the composition is skewed to polar residues. The segment at Met-1–Pro-26 is disordered. Positions 93 and 98 each coordinate Mg(2+). The DDXXXE motif signature appears at Asp-93–Glu-98. A substrate-binding site is contributed by Arg-188. Residues Asn-234 and Ser-238 each coordinate Mg(2+). The NXXXSXXXE motif motif lies at Asn-234–Glu-242. Lys-241 lines the substrate pocket. Glu-242 contacts Mg(2+). Arg-319–Tyr-320 is a binding site for substrate.

The protein belongs to the terpene synthase family. Mg(2+) is required as a cofactor.

It catalyses the reaction (+)-copalyl diphosphate = (12E)-labda-8(17),12,14-triene + diphosphate. Its function is as follows. Involved in the biosynthesis of the labdane-type bicyclic diterpene labda-8(17),12(E),14-triene. Catalyzes the conversion of (+)-copalyl diphosphate to yield labda-8(17),12(E),14-triene. This is (12E)-labda-8(17),12,14-triene synthase from Streptomyces anulatus (Streptomyces chrysomallus).